We begin with the raw amino-acid sequence, 284 residues long: L-ribulose-5-phosphate 3-epimerase UlaE (284 aa).

This sequence belongs to the L-ribulose-5-phosphate 3-epimerase family.

The enzyme catalyses L-ribulose 5-phosphate = L-xylulose 5-phosphate. Its pathway is cofactor degradation; L-ascorbate degradation; D-xylulose 5-phosphate from L-ascorbate: step 3/4. Catalyzes the isomerization of L-xylulose-5-phosphate to L-ribulose-5-phosphate. Is involved in the anaerobic L-ascorbate utilization. The sequence is that of L-ribulose-5-phosphate 3-epimerase UlaE from Escherichia coli (strain SMS-3-5 / SECEC).